Here is a 241-residue protein sequence, read N- to C-terminus: Octanoyltransferase (241 aa).

Residues 49–233 (GEASELVWLL…AFGEVFGPSE (185 aa)) enclose the BPL/LPL catalytic domain. Substrate-binding positions include 87–94 (RGGQVTYH), 162–164 (AIG), and 175–177 (GIS). Cys-193 (acyl-thioester intermediate) is an active-site residue.

This sequence belongs to the LipB family.

It is found in the cytoplasm. The catalysed reaction is octanoyl-[ACP] + L-lysyl-[protein] = N(6)-octanoyl-L-lysyl-[protein] + holo-[ACP] + H(+). It participates in protein modification; protein lipoylation via endogenous pathway; protein N(6)-(lipoyl)lysine from octanoyl-[acyl-carrier-protein]: step 1/2. Catalyzes the transfer of endogenously produced octanoic acid from octanoyl-acyl-carrier-protein onto the lipoyl domains of lipoate-dependent enzymes. Lipoyl-ACP can also act as a substrate although octanoyl-ACP is likely to be the physiological substrate. In Nitrobacter hamburgensis (strain DSM 10229 / NCIMB 13809 / X14), this protein is Octanoyltransferase.